A 629-amino-acid chain; its full sequence is tRNA uridine 5-carboxymethylaminomethyl modification enzyme MnmG (629 aa).

Residues 13-18, Val-125, and Ser-180 contribute to the FAD site; that span reads GGGHAG. 273-287 is a binding site for NAD(+); the sequence is GPRYCPSIEDKVMRF. Gln-370 contacts FAD.

It belongs to the MnmG family. In terms of assembly, homodimer. Heterotetramer of two MnmE and two MnmG subunits. Requires FAD as cofactor.

It is found in the cytoplasm. In terms of biological role, NAD-binding protein involved in the addition of a carboxymethylaminomethyl (cmnm) group at the wobble position (U34) of certain tRNAs, forming tRNA-cmnm(5)s(2)U34. The chain is tRNA uridine 5-carboxymethylaminomethyl modification enzyme MnmG from Sodalis glossinidius (strain morsitans).